The primary structure comprises 1775 residues: Atrochrysone carboxylic acid synthase (1775 aa).

The tract at residues 29-258 (RSQSKTESGW…QLPVYGGLCH (230 aa)) is N-terminal acylcarrier protein transacylase domain (SAT). Positions 391 to 821 (DSSIAIVGMA…GGNTSLLIEE (431 aa)) constitute a Ketosynthase family 3 (KS3) domain. Residues cysteine 564, histidine 699, and histidine 740 each act as for beta-ketoacyl synthase activity in the active site. Positions 921–1241 (FVFSGQGSFY…MAQLHNLGVD (321 aa)) are malonyl-CoA:ACP transacylase (MAT) domain. The tract at residues 1305–1626 (TSLVHRLVCE…RSLINTFFSP (322 aa)) is product template (PT) domain. Residues 1309-1455 (HRLVCESVQE…WLEEWSPMTH (147 aa)) are N-terminal hotdog fold. In terms of domain architecture, PKS/mFAS DH spans 1309 to 1621 (HRLVCESVQE…FRTFPRSLIN (313 aa)). The active-site Proton acceptor; for dehydratase activity is histidine 1341. Residues 1472–1621 (TANRLSRDMV…FRTFPRSLIN (150 aa)) form a C-terminal hotdog fold region. Aspartate 1532 (proton donor; for dehydratase activity) is an active-site residue. The tract at residues 1672 to 1694 (SRTVMDSSDSSPATTLTPPTLPS) is disordered. Positions 1677 to 1689 (DSSDSSPATTLTP) are enriched in low complexity. The 78-residue stretch at 1698–1775 (STESPIVHRA…DLKAWLIDYC (78 aa)) folds into the Carrier domain. O-(pantetheine 4'-phosphoryl)serine is present on serine 1735.

As to expression, endocrocin is specifically produced in conidia.

The enzyme catalyses holo-[ACP] + 8 malonyl-CoA + 8 H(+) = atrochrysone carboxyl-[ACP] + 8 CO2 + 8 CoA + 2 H2O. Its pathway is secondary metabolite biosynthesis. Functionally, non-reducing polyketide synthase; part of the gene cluster that mediates the biosynthesis of endocrocin, a simple anthraquinone interesting for many biotechnological applications. The pathway begins with the synthesis of atrochrysone thioester by the polyketide synthase (PKS) encA. The atrochrysone carboxyl ACP thioesterase encB then breaks the thioester bond and releases the atrochrysone carboxylic acid from encA. The atrochrysone carboxylic acid is then converted to endocrocin anthrone which is further oxidized into endocrocin by the anthrone oxygenase encC. The exact function of encD has not been identified yet, but it negatively regulates endocrocin production, likely through the modification of endocrocin itself. The sequence is that of Atrochrysone carboxylic acid synthase from Aspergillus fumigatus (strain ATCC MYA-4609 / CBS 101355 / FGSC A1100 / Af293) (Neosartorya fumigata).